Reading from the N-terminus, the 408-residue chain is Chaperone protein dnaJ 1, mitochondrial (408 aa).

The transit peptide at 1–26 directs the protein to the mitochondrion; it reads MRRFNWVLRHVQARRTFDSAIGLRQG. Positions 48–113 constitute a J domain; that stretch reads NYYDVLGVSP…ERREEYDKLQ (66 aa). The CR-type zinc-finger motif lies at 173–247; it reads GCTKRLSFDA…CRGSGIVEGT (75 aa). Zn(2+) is bound by residues Cys186, Cys189, Cys203, Cys206, Cys221, Cys224, Cys235, and Cys238. 4 CXXCXGXG motif repeats span residues 186-193, 203-210, 221-228, and 235-242; these read CDSCDGLG, CPTCRGVG, CQTCKGTG, and CMSCRGSG.

It belongs to the DnaJ family. B/II subfamily. As to quaternary structure, homodimer. Requires Zn(2+) as cofactor. As to expression, ubiquitous.

The protein resides in the mitochondrion. Plays a continuous role in plant development probably in the structural organization of compartments. This Arabidopsis thaliana (Mouse-ear cress) protein is Chaperone protein dnaJ 1, mitochondrial (ATJ1).